The primary structure comprises 821 residues: Ent-isokaur-15-ene synthase (821 aa).

Residues aspartate 556, aspartate 560, asparagine 701, threonine 705, and glutamate 709 each coordinate Mg(2+). The short motif at 556–560 is the DDXXD motif element; sequence DDFFD.

It belongs to the terpene synthase family. It depends on Mg(2+) as a cofactor.

It carries out the reaction ent-copalyl diphosphate = ent-isokaurene + diphosphate. The protein operates within secondary metabolite biosynthesis; terpenoid biosynthesis. Functionally, involved in the biosynthesis of ent-kaurene diterpenoids natural products. Catalyzes the conversion of ent-copalyl diphosphate to the phytoalexin precursor ent-isokaur-15-ene. The sequence is that of Ent-isokaur-15-ene synthase from Oryza sativa subsp. indica (Rice).